A 106-amino-acid polypeptide reads, in one-letter code: Replication protein A 14 kDa subunit B (106 aa).

Met-1 is subject to N-acetylmethionine.

It belongs to the replication factor A protein 3 family. Component of the heterotrimeric canonical replication protein A complex (RPA).

It is found in the nucleus. Functionally, as part of the replication protein A (RPA/RP-A), a single-stranded DNA-binding heterotrimeric complex, may play an essential role in DNA replication, recombination and repair. Binds and stabilizes single-stranded DNA intermediates, preventing complementary DNA reannealing and recruiting different proteins involved in DNA metabolism. This Arabidopsis thaliana (Mouse-ear cress) protein is Replication protein A 14 kDa subunit B (RPA3B).